Here is an 87-residue protein sequence, read N- to C-terminus: Large ribosomal subunit protein bL27 (87 aa).

This sequence belongs to the bacterial ribosomal protein bL27 family.

This Stenotrophomonas maltophilia (strain K279a) protein is Large ribosomal subunit protein bL27.